A 1890-amino-acid chain; its full sequence is Proteasome-associated protein ECM29 homolog (1890 aa).

18 HEAT repeats span residues 6 to 29 (NAEIELLERVLLRLGNADSDEKLE), 30 to 67 (AAVGKFLTPVILKMNSPHNVVRTKVVEVLTHIKRRLSS), 130 to 167 (DKLFALLLPVLSDMKIPDDPTQRSKLLDLQDKPAICAN), 226 to 263 (FSDLQIFVPLVVASADTRFSVATPAITELSKLCTMLDF), 294 to 330 (RVRQKLLQYLIKCRGKSINVTKGLQVTFDGFFGTNTN), 334 to 354 (KVLALQFMELLLRDGPRELVS), 355 to 395 (KVSK…SFPQ), 459 to 496 (GQQHLLLAMLLDNAESKVQIVQNVTSVFLTSCYPEYYA), 498 to 523 (ARYLLLLIAGERNSLRENVTTYLYGT), 524 to 561 (SKKDHINYSMLSSIDHSKNRISSESISDFNHLSLEQRR), 565 to 602 (PSFQVMMSHVHEMAEKRLKKNTACVVVGRTKLPYSLEV), 685 to 722 (AKQLHLLEPLGNTLKDVSETMRINVAQVYGILWAFGLS), 776 to 813 (PQFVNAVKIISKCLCESQWLLVSAAVKCISMIGKAVEI), 843 to 882 (STKLVIFGVVFQLLRSSSARQKIREDSARCLGYLAIGDGE), 938 to 975 (DDFDQFLNSLIRLVTDPNPHSRQAISVWLLAVVKHCSQ), 980 to 1018 (LAKKELLQFAFTELLSDDSEFVQDVASRGLGLVYSISDS), 1118 to 1155 (PYLGKIIPRLYRYKYDPTPKIQNSMISIWDTIVTDSKE), and 1159 to 1196 (RYYWEILRELLDNLTCKEWRVRIACCLAVRDLLNRPNG). S1213 is subject to Phosphoserine. HEAT repeat units lie at residues 1271 to 1309 (AVASSILPFLLETGVGHKVPEIRRVSIKTISDMIDSSGS), 1313 to 1350 (PHLATLIPCLLRATGELENTKLSYVSTRLGADNEAQEA), 1378 to 1415 (SVLEKMTPEVLELMKGSVNLGTKIGCAHFVCLISIRLG), 1416 to 1457 (KEMT…LAKE), 1497 to 1534 (DYMDSMLPLIFFAMHEEPNEETKANVELWKDLWHDVSP), 1541 to 1578 (LNLNVIIPKLESSLTDASWSRKAQAANAIQTIATRLSS), 1583 to 1620 (PDRLRLIKLLLSGLQGRTFEGKERLLQALAALTKGLDR), and 1623 to 1660 (QICSSIIDAAMREARKREPVYRTMALASLGEILDQLEA). Residues 1680 to 1702 (RKESDDEDEPNTSQELSADERNK) are disordered. S1683 is modified (phosphoserine). A Phosphothreonine modification is found at T1691. Phosphoserine is present on S1692. 2 HEAT repeats span residues 1751–1788 (PVQVSLLAALTKYIERLHVFDESAQVPDLTQINQEKKI) and 1826–1863 (KEALNIVLMLIKRLSGSGNGNQQPLRLIKQSFESNLEK).

Associated with the proteasome.

The protein localises to the cytoplasm. The polypeptide is Proteasome-associated protein ECM29 homolog (Drosophila melanogaster (Fruit fly)).